Reading from the N-terminus, the 172-residue chain is L-methionine sulfoximine/L-methionine sulfone acetyltransferase (172 aa).

One can recognise an N-acetyltransferase domain in the interval 3-166 (ASIRDAGVAD…DLTFMQLNLD (164 aa)). Substrate is bound by residues 75-77 (RPF) and 85-87 (EHS). Residues 88 to 90 (VYV), 96 to 101 (GKGLGV), and Asn-127 each bind acetyl-CoA.

In terms of assembly, homodimer.

It catalyses the reaction L-methionine sulfoximine + acetyl-CoA = N-acetyl-L-methionine sulfoximine + CoA + H(+). The enzyme catalyses L-methionine sulfone + acetyl-CoA = N-acetyl-L-methionine sulfone + CoA + H(+). Functionally, plays a role in the resistance against the toxic effects of L-methionine sulfoximine (MSX), a rare amino acid, which inhibits glutamine synthetase (GlnA). Catalyzes the acetylation of L-methionine sulfoximine (MSX). It can also use L-methionine sulfone (MSO). This chain is L-methionine sulfoximine/L-methionine sulfone acetyltransferase, found in Pseudomonas paraeruginosa (strain DSM 24068 / PA7) (Pseudomonas aeruginosa (strain PA7)).